A 249-amino-acid polypeptide reads, in one-letter code: 3-deoxy-D-manno-octulosonic acid kinase (249 aa).

The active site involves Asp-175.

This sequence belongs to the protein kinase superfamily. KdkA/RfaP family.

The protein localises to the cell inner membrane. The enzyme catalyses an alpha-Kdo-(2-&gt;6)-lipid IVA + ATP = a 4-O-phospho-alpha-Kdo-(2-&gt;6)-lipid IVA + ADP + H(+). Its pathway is bacterial outer membrane biogenesis; LPS core biosynthesis. Catalyzes the ATP-dependent phosphorylation of the 3-deoxy-D-manno-octulosonic acid (Kdo) residue in Kdo-lipid IV(A) at the 4-OH position. In Stenotrophomonas maltophilia (strain R551-3), this protein is 3-deoxy-D-manno-octulosonic acid kinase.